Reading from the N-terminus, the 371-residue chain is Transaldolase (371 aa).

K132 is covalently cross-linked (Isoglutamyl lysine isopeptide (Lys-Gln) (interchain with Q-Cter in protein Pup)). The active-site Schiff-base intermediate with substrate is K142.

This sequence belongs to the transaldolase family. Type 2 subfamily.

Its subcellular location is the cytoplasm. It carries out the reaction D-sedoheptulose 7-phosphate + D-glyceraldehyde 3-phosphate = D-erythrose 4-phosphate + beta-D-fructose 6-phosphate. The protein operates within carbohydrate degradation; pentose phosphate pathway; D-glyceraldehyde 3-phosphate and beta-D-fructose 6-phosphate from D-ribose 5-phosphate and D-xylulose 5-phosphate (non-oxidative stage): step 2/3. In terms of biological role, transaldolase is important for the balance of metabolites in the pentose-phosphate pathway. This Mycolicibacterium smegmatis (strain ATCC 700084 / mc(2)155) (Mycobacterium smegmatis) protein is Transaldolase (tal).